Here is a 238-residue protein sequence, read N- to C-terminus: Probable transcriptional regulatory protein SGO_0454 (238 aa).

It belongs to the TACO1 family. YeeN subfamily.

It is found in the cytoplasm. This chain is Probable transcriptional regulatory protein SGO_0454, found in Streptococcus gordonii (strain Challis / ATCC 35105 / BCRC 15272 / CH1 / DL1 / V288).